We begin with the raw amino-acid sequence, 529 residues long: Bifunctional purine biosynthesis protein PurH (529 aa).

Residues 1–148 (MQQRRPVRRA…KNHKDVAIVV (148 aa)) enclose the MGS-like domain.

This sequence belongs to the PurH family.

The catalysed reaction is (6R)-10-formyltetrahydrofolate + 5-amino-1-(5-phospho-beta-D-ribosyl)imidazole-4-carboxamide = 5-formamido-1-(5-phospho-D-ribosyl)imidazole-4-carboxamide + (6S)-5,6,7,8-tetrahydrofolate. It catalyses the reaction IMP + H2O = 5-formamido-1-(5-phospho-D-ribosyl)imidazole-4-carboxamide. Its pathway is purine metabolism; IMP biosynthesis via de novo pathway; 5-formamido-1-(5-phospho-D-ribosyl)imidazole-4-carboxamide from 5-amino-1-(5-phospho-D-ribosyl)imidazole-4-carboxamide (10-formyl THF route): step 1/1. The protein operates within purine metabolism; IMP biosynthesis via de novo pathway; IMP from 5-formamido-1-(5-phospho-D-ribosyl)imidazole-4-carboxamide: step 1/1. The protein is Bifunctional purine biosynthesis protein PurH of Salmonella paratyphi B (strain ATCC BAA-1250 / SPB7).